Here is a 460-residue protein sequence, read N- to C-terminus: Diguanylate cyclase DosC (460 aa).

Heme is bound at residue His-98. In terms of domain architecture, GGDEF spans 325–458 (TPLSVLIIDV…GRNRVELWKA (134 aa)). Position 333 (Asp-333) interacts with Mg(2+). Substrate-binding residues include Asn-341 and Asp-350. Asp-376 is a Mg(2+) binding site. Asp-376 acts as the Proton acceptor in catalysis.

It depends on heme as a cofactor. Requires Mg(2+) as cofactor.

The catalysed reaction is 2 GTP = 3',3'-c-di-GMP + 2 diphosphate. It participates in purine metabolism; 3',5'-cyclic di-GMP biosynthesis. Globin-coupled heme-based oxygen sensor protein displaying diguanylate cyclase (DGC) activity in response to oxygen availability. Thus, catalyzes the synthesis of cyclic diguanylate (c-di-GMP) via the condensation of 2 GTP molecules. Cyclic-di-GMP is a second messenger which controls cell surface-associated traits in bacteria. This is Diguanylate cyclase DosC (dosC) from Escherichia coli O157:H7.